The sequence spans 2250 residues: RNA1 polyprotein (2250 aa).

Positions 346–371 (SPTVTPSSTPSTSRSSSPEPRVSSPS) are enriched in low complexity. A disordered region spans residues 346–372 (SPTVTPSSTPSTSRSSSPEPRVSSPSG). The 172-residue stretch at 849–1020 (LRDAHNALSR…PHFHEFNLLA (172 aa)) folds into the SF3 helicase domain. Residues 1225 to 1245 (VALCAVLLVGYLIIKFAIFLF) form a helical membrane-spanning segment. Ser-1299 carries the post-translational modification O-(5'-phospho-RNA)-serine. The Peptidase C3 domain occupies 1319–1532 (GPEEEPSQSL…YAQIVTLDDF (214 aa)). Catalysis depends on for picornain 3C-like protease activity residues His-1362, Asp-1400, and Cys-1495. In terms of domain architecture, RdRp catalytic spans 1814–1956 (TNWFNGDYSR…SVNDVITEKF (143 aa)).

The protein belongs to the comoviridae genome polyprotein B family. Specific enzymatic cleavages by picornain 3C-like protease in vivo yield mature proteins. Picornain 3C-like protease is autocatalytically processed. Post-translationally, viral genome-linked protein (VPg) is uridylylated by the polymerase and is covalently linked to the 5'-end of genomic RNA. This uridylylated form acts as a nucleotide-peptide primer for the polymerase.

The protein localises to the host membrane. It catalyses the reaction RNA(n) + a ribonucleoside 5'-triphosphate = RNA(n+1) + diphosphate. In terms of biological role, picornain 3C-like protease is a thiol protease that probably cleaves the B and M polyproteins. Viral genome-linked protein (VPg) plays a role in RNA replication. This chain is RNA1 polyprotein, found in Balsamorhiza sagittata (Apple).